We begin with the raw amino-acid sequence, 208 residues long: N-(5'-phosphoribosyl)anthranilate isomerase (208 aa).

It belongs to the TrpF family.

It catalyses the reaction N-(5-phospho-beta-D-ribosyl)anthranilate = 1-(2-carboxyphenylamino)-1-deoxy-D-ribulose 5-phosphate. The protein operates within amino-acid biosynthesis; L-tryptophan biosynthesis; L-tryptophan from chorismate: step 3/5. The protein is N-(5'-phosphoribosyl)anthranilate isomerase (trpF) of Pyrobaculum aerophilum (strain ATCC 51768 / DSM 7523 / JCM 9630 / CIP 104966 / NBRC 100827 / IM2).